We begin with the raw amino-acid sequence, 365 residues long: 2'-hydroxybiphenyl-2-sulfinate desulfinase (365 aa).

Cys27 is an active-site residue. 2'-hydroxybiphenyl-2-sulfinate-binding residues include Cys27, His60, and Arg70. Residue Arg70 is part of the active site.

The protein belongs to the DszB desulfinase family. In terms of assembly, monomer.

It is found in the cytoplasm. The catalysed reaction is 2'-hydroxybiphenyl-2-sulfinate + H2O = biphenyl-2-ol + sulfite + H(+). It participates in sulfur metabolism; dibenzothiophene degradation. Functionally, catalyzes the third and final step of the '4S' desulfurization pathway that removes covalently bound sulfur from dibenzothiophene (DBT) without breaking carbon-carbon bonds. Oxidizes 2-(2'-hydroxyphenyl)benzene sulphinate (HBPS) to 2-hydroxybiphenyl (HBP) plus sulfite. The rate-limiting step of the '4S' desulfurization pathway. The sequence is that of 2'-hydroxybiphenyl-2-sulfinate desulfinase from Rhodococcus erythropolis (Arthrobacter picolinophilus).